The chain runs to 213 residues: Thymidylate kinase (213 aa).

Residue 10–17 coordinates ATP; the sequence is GLEGAGKT.

Belongs to the thymidylate kinase family.

It carries out the reaction dTMP + ATP = dTDP + ADP. Functionally, phosphorylation of dTMP to form dTDP in both de novo and salvage pathways of dTTP synthesis. This is Thymidylate kinase from Escherichia coli O157:H7 (strain EC4115 / EHEC).